The following is a 182-amino-acid chain: CDP-diacylglycerol--glycerol-3-phosphate 3-phosphatidyltransferase (182 aa).

Residues 2 to 12 (QFNIPTLLTLF) are Cytoplasmic-facing. Residues 13 to 37 (RVILIPFLVVVFYLPFAWAPMVSAL) traverse the membrane as a helical segment. The Periplasmic segment spans residues 38–60 (IFCIAAITDWFDGFLARRWNQST). The chain crosses the membrane as a helical span at residues 61–81 (RFGAFLDPVADKVLVAIAMVL). At 82–86 (VTEHY) the chain is on the cytoplasmic side. Residues 87 to 107 (HSWWVTLPAATMIAREIIISA) form a helical membrane-spanning segment. Topologically, residues 108 to 145 (LREWMAELGKRSSVAVSWIGKVKTTAQMVALAWLLWRP) are periplasmic. Residues 146 to 168 (NIWVEYAGIALFFVAAVLTLWSM) traverse the membrane as a helical segment. Residues 169 to 181 (LQYLSAARGDLLD) are Cytoplasmic-facing.

It belongs to the CDP-alcohol phosphatidyltransferase class-I family.

The protein localises to the cell inner membrane. The enzyme catalyses a CDP-1,2-diacyl-sn-glycerol + sn-glycerol 3-phosphate = a 1,2-diacyl-sn-glycero-3-phospho-(1'-sn-glycero-3'-phosphate) + CMP + H(+). The protein operates within phospholipid metabolism; phosphatidylglycerol biosynthesis; phosphatidylglycerol from CDP-diacylglycerol: step 1/2. Functionally, catalyzes the conversion of cytidine diphosphate diacylglycerol (CDP-DG) and glycerol 3-phosphate into phosphatidylglycerol. Essential for the synthesis of anionic phospholipids, thereby playing a role in balancing the ratio of zwitterionic and anionic phospholipids, which is thought to be important for normal membrane function. This is CDP-diacylglycerol--glycerol-3-phosphate 3-phosphatidyltransferase from Salmonella choleraesuis (strain SC-B67).